The chain runs to 580 residues: Putative monoterpene synthase 8 (580 aa).

The transit peptide at 1-44 directs the protein to the chloroplast; the sequence is MACTSNLSSLSKSWAVLDVPRGAPKATGLWLKRQFIFKTSRICM. Mg(2+) is bound by residues aspartate 333, aspartate 337, aspartate 478, threonine 482, and glutamate 486. The short motif at 333–337 is the DDXXD motif element; sequence DDIFD.

It belongs to the terpene synthase family. Tpsg subfamily. In terms of assembly, monomer. It depends on Mg(2+) as a cofactor. Mn(2+) serves as cofactor. As to expression, confined to flowers.

It is found in the plastid. The protein localises to the chloroplast. The protein operates within secondary metabolite biosynthesis; terpenoid biosynthesis. Its function is as follows. Monoterpene synthase (mono-TPS) involved in the biosynthesis of monoterpenes natural products, constituent of coffee beverage aroma. This Coffea arabica (Arabian coffee) protein is Putative monoterpene synthase 8.